We begin with the raw amino-acid sequence, 298 residues long: Phospholipase A1 (298 aa).

Cysteines 4 and 87 form a disulfide. N-linked (GlcNAc...) asparagine glycans are attached at residues Asn88 and Asn122. Ser134 functions as the Nucleophile in the catalytic mechanism. Catalysis depends on Asp162, which acts as the Charge relay system. 2 disulfides stabilise this stretch: Cys173–Cys178 and Cys216–Cys225. His227 (charge relay system) is an active-site residue. 3 disulfide bridges follow: Cys242/Cys266, Cys243/Cys291, and Cys259/Cys264.

Belongs to the AB hydrolase superfamily. Lipase family. In terms of tissue distribution, expressed by the venom gland.

Its subcellular location is the secreted. It carries out the reaction a 1,2-diacyl-sn-glycero-3-phosphocholine + H2O = a 2-acyl-sn-glycero-3-phosphocholine + a fatty acid + H(+). Catalyzes the hydrolysis of phosphatidylcholine with phospholipase A1 activity. May act as an allergen and induce hemolytic activity. The chain is Phospholipase A1 from Vespula squamosa (Southern yellow jacket).